The following is a 434-amino-acid chain: CBL-interacting protein kinase 15 (434 aa).

The region spanning 12–267 (YELGRLLGKG…IQKIKESTWF (256 aa)) is the Protein kinase domain. ATP is bound by residues 18 to 26 (LGKGTFGKV) and Lys-41. Asp-135 (proton acceptor) is an active-site residue. Positions 153-182 (DFGLSALSESKRQDGLLHTTCGTPAYVAPE) are activation loop. Positions 298–333 (RKKNAHEDVKPMSVTNLNAFEIISFSKGFDLSGMFI) constitute an NAF domain. The segment at 338 to 367 (RNEARFTSDKSASTIISKLEDVAKALNLRV) is PPI.

It belongs to the protein kinase superfamily. CAMK Ser/Thr protein kinase family. SNF1 subfamily. Requires Mn(2+) as cofactor.

The enzyme catalyses L-seryl-[protein] + ATP = O-phospho-L-seryl-[protein] + ADP + H(+). It carries out the reaction L-threonyl-[protein] + ATP = O-phospho-L-threonyl-[protein] + ADP + H(+). In terms of biological role, involved in salt stress tolerance. CIPK serine-threonine protein kinases interact with CBL proteins. Binding of a CBL protein to the regulatory NAF domain of CIPK protein lead to the activation of the kinase in a calcium-dependent manner. The sequence is that of CBL-interacting protein kinase 15 (CIPK15) from Oryza sativa subsp. japonica (Rice).